A 478-amino-acid polypeptide reads, in one-letter code: Serine hydroxymethyltransferase (478 aa).

Residues Leu-161 and 165–167 (GHL) each bind (6S)-5,6,7,8-tetrahydrofolate. At Lys-273 the chain carries N6-(pyridoxal phosphate)lysine. A (6S)-5,6,7,8-tetrahydrofolate-binding site is contributed by Glu-291.

The protein belongs to the SHMT family. Homodimer. Pyridoxal 5'-phosphate serves as cofactor.

It localises to the cytoplasm. It catalyses the reaction (6R)-5,10-methylene-5,6,7,8-tetrahydrofolate + glycine + H2O = (6S)-5,6,7,8-tetrahydrofolate + L-serine. The protein operates within one-carbon metabolism; tetrahydrofolate interconversion. It functions in the pathway amino-acid biosynthesis; glycine biosynthesis; glycine from L-serine: step 1/1. In terms of biological role, catalyzes the reversible interconversion of serine and glycine with tetrahydrofolate (THF) serving as the one-carbon carrier. This reaction serves as the major source of one-carbon groups required for the biosynthesis of purines, thymidylate, methionine, and other important biomolecules. Also exhibits THF-independent aldolase activity toward beta-hydroxyamino acids, producing glycine and aldehydes, via a retro-aldol mechanism. The protein is Serine hydroxymethyltransferase of Salinispora tropica (strain ATCC BAA-916 / DSM 44818 / JCM 13857 / NBRC 105044 / CNB-440).